Here is a 655-residue protein sequence, read N- to C-terminus: Probable alpha-galactosidase D (655 aa).

The N-terminal stretch at 1–16 (MLPKIFYLSLLPAALG) is a signal peptide. N-linked (GlcNAc...) asparagine glycosylation is found at Asn47 and Asn91. An intrachain disulfide couples Cys124 to Cys155. Asp153 (nucleophile) is an active-site residue. Asn180 and Asn189 each carry an N-linked (GlcNAc...) asparagine glycan. 198-202 (EWGID) is a substrate binding site. The active-site Proton donor is the Asp220. N-linked (GlcNAc...) asparagine glycosylation is found at Asn349, Asn436, Asn458, Asn503, Asn537, Asn541, and Asn580.

The protein belongs to the glycosyl hydrolase 27 family.

The protein resides in the secreted. The enzyme catalyses Hydrolysis of terminal, non-reducing alpha-D-galactose residues in alpha-D-galactosides, including galactose oligosaccharides, galactomannans and galactolipids.. Its function is as follows. Hydrolyzes a variety of simple alpha-D-galactoside as well as more complex molecules such as oligosaccharides and polysaccharides. This Aspergillus flavus (strain ATCC 200026 / FGSC A1120 / IAM 13836 / NRRL 3357 / JCM 12722 / SRRC 167) protein is Probable alpha-galactosidase D (aglD).